The following is a 206-amino-acid chain: Stage III sporulation protein AF (206 aa).

2 helical membrane passes run 1-21 (MSFLTEWLTTIVLFILFAIVI) and 34-54 (AKMVVSLLLIVVMLTPIFKLF).

The protein resides in the cell membrane. This Bacillus subtilis (strain 168) protein is Stage III sporulation protein AF (spoIIIAF).